The primary structure comprises 312 residues: Very-long-chain 3-oxoacyl-CoA reductase (312 aa).

The helical transmembrane segment at 4–24 (ALPAAGFLYWVGAGTVAYLAL) threads the bilayer. NADP(+) is bound at residue 50–79 (GEWAVVTGSTDGIGKSYAEELAKHGMKVVL). Helical transmembrane passes span 182–202 (GAILNISSGSGMLPVPLLTIY) and 271–291 (GYLIHALMGSIISNLPSWIYL). Residue serine 189 participates in substrate binding. Tyrosine 202 serves as the catalytic Proton acceptor. Residues 308–312 (KTKKN) carry the Di-lysine motif motif.

It belongs to the short-chain dehydrogenases/reductases (SDR) family. 17-beta-HSD 3 subfamily. As to quaternary structure, interacts with ELOVL1 and LASS2. In terms of tissue distribution, expressed in most tissues tested. Highly expressed in the ovary and mammary. Expressed in platelets.

Its subcellular location is the endoplasmic reticulum membrane. The enzyme catalyses a very-long-chain (3R)-3-hydroxyacyl-CoA + NADP(+) = a very-long-chain 3-oxoacyl-CoA + NADPH + H(+). It catalyses the reaction 17beta-estradiol + NAD(+) = estrone + NADH + H(+). The catalysed reaction is 17beta-estradiol + NADP(+) = estrone + NADPH + H(+). It carries out the reaction 3-oxooctadecanoyl-CoA + NADPH + H(+) = (3R)-hydroxyoctadecanoyl-CoA + NADP(+). The enzyme catalyses (7Z,10Z,13Z,16Z)-3-oxodocosatetraenoyl-CoA + NADPH + H(+) = (3R)-hydroxy-(7Z,10Z,13Z,16Z)-docosatetraenoyl-CoA + NADP(+). It catalyses the reaction 3-oxo-(7Z,10Z,13Z,16Z,19Z)-docosapentaenoyl-CoA + NADPH + H(+) = (3R)-hydroxy-(7Z,10Z,13Z,16Z,19Z)-docosapentaenoyl-CoA + NADP(+). The catalysed reaction is (8Z,11Z,14Z)-3-oxoeicosatrienoyl-CoA + NADPH + H(+) = (3R)-hydroxy-(8Z,11Z,14Z)-eicosatrienoyl-CoA + NADP(+). Its pathway is lipid metabolism; fatty acid biosynthesis. It functions in the pathway steroid biosynthesis; estrogen biosynthesis. Functionally, catalyzes the second of the four reactions of the long-chain fatty acids elongation cycle. This endoplasmic reticulum-bound enzymatic process, allows the addition of two carbons to the chain of long- and very long-chain fatty acids/VLCFAs per cycle. This enzyme has a 3-ketoacyl-CoA reductase activity, reducing 3-ketoacyl-CoA to 3-hydroxyacyl-CoA, within each cycle of fatty acid elongation. Thereby, it may participate in the production of VLCFAs of different chain lengths that are involved in multiple biological processes as precursors of membrane lipids and lipid mediators. May also catalyze the transformation of estrone (E1) into estradiol (E2) and play a role in estrogen formation. The chain is Very-long-chain 3-oxoacyl-CoA reductase from Homo sapiens (Human).